The sequence spans 223 residues: Gastrula zinc finger protein XlCGF52.1 (223 aa).

8 C2H2-type zinc fingers span residues 6–27 (FTCP…TEDH), 33–55 (FTCM…QRVH), 61–83 (YTCT…ISTH), 89–111 (FPCT…QRIH), 117–139 (FQCL…QRSH), 145–167 (YACS…ERIH), 173–195 (YECN…QKIH), and 201–223 (FTCT…QKIH).

This sequence belongs to the krueppel C2H2-type zinc-finger protein family.

The protein resides in the nucleus. In terms of biological role, may be involved in transcriptional regulation. The protein is Gastrula zinc finger protein XlCGF52.1 of Xenopus laevis (African clawed frog).